We begin with the raw amino-acid sequence, 76 residues long: U1-cyrtautoxin-As1b (76 aa).

Disulfide bonds link Cys-23-Cys-37, Cys-30-Cys-51, Cys-36-Cys-66, and Cys-69-Cys-76.

It belongs to the neurotoxin 21 family. In terms of tissue distribution, expressed by the venom gland.

Its subcellular location is the secreted. Neurotoxin with probable ion channel impairing activity. Is both paralytic and lethal, when injected into lepidopteran larvae. This chain is U1-cyrtautoxin-As1b, found in Apomastus schlingeri (Trap-door spider).